Here is a 343-residue protein sequence, read N- to C-terminus: GTPase Obg (343 aa).

One can recognise an Obg domain in the interval 1 to 159 (MKFIDEVKIQ…FELRLELRVL (159 aa)). An OBG-type G domain is found at 160-334 (ADVGLLGLPN…LIYAIMGHLQ (175 aa)). Residues 166-173 (GLPNAGKS), 191-195 (FTTLY), 213-216 (DIPG), 284-287 (NKVD), and 315-317 (SAL) contribute to the GTP site. Mg(2+) contacts are provided by Ser-173 and Thr-193.

It belongs to the TRAFAC class OBG-HflX-like GTPase superfamily. OBG GTPase family. As to quaternary structure, monomer. Requires Mg(2+) as cofactor.

The protein resides in the cytoplasm. In terms of biological role, an essential GTPase which binds GTP, GDP and possibly (p)ppGpp with moderate affinity, with high nucleotide exchange rates and a fairly low GTP hydrolysis rate. Plays a role in control of the cell cycle, stress response, ribosome biogenesis and in those bacteria that undergo differentiation, in morphogenesis control. The protein is GTPase Obg of Nitrosomonas europaea (strain ATCC 19718 / CIP 103999 / KCTC 2705 / NBRC 14298).